The following is a 452-amino-acid chain: Probable ECA polymerase (452 aa).

A run of 11 helical transmembrane segments spans residues 6-26 (FSGL…LTWF), 37-57 (VFFS…TSVL), 63-83 (VGVA…CFYG), 118-138 (VILM…NGFL), 155-175 (GVAL…VYFL), 181-201 (AWLF…MIVG), 207-227 (IIIA…ISLW), 228-248 (MLAA…LKRY), 341-361 (LVVM…GLII), 378-398 (YKAA…IVLA), and 410-430 (VFFL…FWLF).

It belongs to the WzyE family. As to quaternary structure, probably part of a complex composed of WzxE, WzyE and WzzE.

The protein resides in the cell inner membrane. Its pathway is bacterial outer membrane biogenesis; enterobacterial common antigen biosynthesis. Its function is as follows. Probably involved in the polymerization of enterobacterial common antigen (ECA) trisaccharide repeat units. The chain is Probable ECA polymerase from Salmonella heidelberg (strain SL476).